The following is a 296-amino-acid chain: Phosphatidylglycerol--prolipoprotein diacylglyceryl transferase (296 aa).

The next 3 membrane-spanning stretches (helical) occupy residues 17–37 (LAVR…IVVG), 59–79 (MMFY…VLFY), and 97–117 (GGMS…LFAW). Arg-142 serves as a coordination point for a 1,2-diacyl-sn-glycero-3-phospho-(1'-sn-glycerol). A run of 2 helical transmembrane segments spans residues 230 to 250 (MGAI…TVEF) and 265 to 285 (LSMG…MMIW).

The protein belongs to the Lgt family.

Its subcellular location is the cell inner membrane. The enzyme catalyses L-cysteinyl-[prolipoprotein] + a 1,2-diacyl-sn-glycero-3-phospho-(1'-sn-glycerol) = an S-1,2-diacyl-sn-glyceryl-L-cysteinyl-[prolipoprotein] + sn-glycerol 1-phosphate + H(+). Its pathway is protein modification; lipoprotein biosynthesis (diacylglyceryl transfer). Its function is as follows. Catalyzes the transfer of the diacylglyceryl group from phosphatidylglycerol to the sulfhydryl group of the N-terminal cysteine of a prolipoprotein, the first step in the formation of mature lipoproteins. The chain is Phosphatidylglycerol--prolipoprotein diacylglyceryl transferase from Burkholderia mallei (strain NCTC 10247).